The primary structure comprises 556 residues: Dihydroxy-acid dehydratase (556 aa).

Residue Asp78 coordinates Mg(2+). Cys119 contributes to the [2Fe-2S] cluster binding site. Asp120 and Lys121 together coordinate Mg(2+). The residue at position 121 (Lys121) is an N6-carboxylysine. A [2Fe-2S] cluster-binding site is contributed by Cys191. Glu442 lines the Mg(2+) pocket. The active-site Proton acceptor is the Ser468.

Belongs to the IlvD/Edd family. In terms of assembly, homodimer. The cofactor is [2Fe-2S] cluster. Mg(2+) is required as a cofactor.

It carries out the reaction (2R)-2,3-dihydroxy-3-methylbutanoate = 3-methyl-2-oxobutanoate + H2O. The catalysed reaction is (2R,3R)-2,3-dihydroxy-3-methylpentanoate = (S)-3-methyl-2-oxopentanoate + H2O. The protein operates within amino-acid biosynthesis; L-isoleucine biosynthesis; L-isoleucine from 2-oxobutanoate: step 3/4. It functions in the pathway amino-acid biosynthesis; L-valine biosynthesis; L-valine from pyruvate: step 3/4. Its function is as follows. Functions in the biosynthesis of branched-chain amino acids. Catalyzes the dehydration of (2R,3R)-2,3-dihydroxy-3-methylpentanoate (2,3-dihydroxy-3-methylvalerate) into 2-oxo-3-methylpentanoate (2-oxo-3-methylvalerate) and of (2R)-2,3-dihydroxy-3-methylbutanoate (2,3-dihydroxyisovalerate) into 2-oxo-3-methylbutanoate (2-oxoisovalerate), the penultimate precursor to L-isoleucine and L-valine, respectively. This is Dihydroxy-acid dehydratase from Clostridium beijerinckii (strain ATCC 51743 / NCIMB 8052) (Clostridium acetobutylicum).